Consider the following 469-residue polypeptide: Ribosomal protein uS12 methylthiotransferase RimO (469 aa).

The MTTase N-terminal domain occupies 3–119 (TRVYMHTLGC…VARIVSDAQA (117 aa)). [4Fe-4S] cluster is bound by residues C12, C48, C82, C154, C158, and C161. Positions 140–370 (SLPSHTAYLK…MAVQQAISRA (231 aa)) constitute a Radical SAM core domain. The TRAM domain maps to 373 to 441 (QAMIGRRVEV…EYDLVGRVVA (69 aa)). Positions 444–469 (PSRAARPLPAAPRAAPARKGGLNVLR) are disordered. Residues 447–461 (AARPLPAAPRAAPAR) are compositionally biased toward low complexity.

Belongs to the methylthiotransferase family. RimO subfamily. [4Fe-4S] cluster is required as a cofactor.

It localises to the cytoplasm. It catalyses the reaction L-aspartate(89)-[ribosomal protein uS12]-hydrogen + (sulfur carrier)-SH + AH2 + 2 S-adenosyl-L-methionine = 3-methylsulfanyl-L-aspartate(89)-[ribosomal protein uS12]-hydrogen + (sulfur carrier)-H + 5'-deoxyadenosine + L-methionine + A + S-adenosyl-L-homocysteine + 2 H(+). Functionally, catalyzes the methylthiolation of an aspartic acid residue of ribosomal protein uS12. The protein is Ribosomal protein uS12 methylthiotransferase RimO of Anaeromyxobacter sp. (strain K).